The sequence spans 200 residues: Small ribosomal subunit protein uS4 (200 aa).

One can recognise an S4 RNA-binding domain in the interval 94 to 157 (SRLDNLVFRA…QTSPQVKDAV (64 aa)).

Belongs to the universal ribosomal protein uS4 family. As to quaternary structure, part of the 30S ribosomal subunit. Contacts protein S5. The interaction surface between S4 and S5 is involved in control of translational fidelity.

One of the primary rRNA binding proteins, it binds directly to 16S rRNA where it nucleates assembly of the body of the 30S subunit. Functionally, with S5 and S12 plays an important role in translational accuracy. This is Small ribosomal subunit protein uS4 from Metamycoplasma arthritidis (strain 158L3-1) (Mycoplasma arthritidis).